Consider the following 282-residue polypeptide: Deoxyribonuclease-1 (282 aa).

Residues 1-22 form the signal peptide; the sequence is MRGMKLLGALLALAALLQGAVS. An N-linked (GlcNAc...) asparagine glycan is attached at Asn40. Glu100 is an active-site residue. A disulfide bridge connects residues Cys123 and Cys126. Asn128 carries an N-linked (GlcNAc...) asparagine glycan. His156 is a catalytic residue. An intrachain disulfide couples Cys195 to Cys231.

It belongs to the DNase I family. The cofactor is Ca(2+). Mg(2+) serves as cofactor. Principally in tissues of the digestive system. Highest levels found in urine, but also relatively abundant in semen and saliva.

The protein localises to the secreted. Its subcellular location is the zymogen granule. It localises to the nucleus envelope. It catalyses the reaction Endonucleolytic cleavage to 5'-phosphodinucleotide and 5'-phosphooligonucleotide end-products.. Its function is as follows. Serum endocuclease secreted into body fluids by a wide variety of exocrine and endocrine organs. Expressed by non-hematopoietic tissues and preferentially cleaves protein-free DNA. Among other functions, seems to be involved in cell death by apoptosis. Binds specifically to G-actin and blocks actin polymerization. Together with DNASE1L3, plays a key role in degrading neutrophil extracellular traps (NETs). NETs are mainly composed of DNA fibers and are released by neutrophils to bind pathogens during inflammation. Degradation of intravascular NETs by DNASE1 and DNASE1L3 is required to prevent formation of clots that obstruct blood vessels and cause organ damage following inflammation. In Homo sapiens (Human), this protein is Deoxyribonuclease-1.